A 303-amino-acid polypeptide reads, in one-letter code: MISIFSKLKQSLSKTSNKISKGIDKIFYKKKLDTETLEELEELLIASDMSVSVVTNIIEEFKKVKFDKEIDSDTVKEALAELIEQQLSKSEIPFTLNENKLNVILVCGVNGAGKTTTIGKLAAMYGMQGKKVAVAACDTFRAAAVNQLSTWVDRANALLITGEESADPASVAYRAMEESIKQNIDILFIDTAGRLHNKKNLMDELSKIVKVIKKLDENAPTHSVLVIDAITGQNTYNQVEHFNDATNLTGLIVTKLDGSAKAGVLVGVVQKFNLPVYFIGIGEKIEDLKIFNRHDFAKSLVGL.

GTP contacts are provided by residues G108–T115, D190–R194, and T254–D257.

The protein belongs to the GTP-binding SRP family. FtsY subfamily. Part of the signal recognition particle protein translocation system, which is composed of SRP and FtsY. SRP is a ribonucleoprotein composed of Ffh and a 4.5S RNA molecule.

It is found in the cell inner membrane. The protein resides in the cytoplasm. It catalyses the reaction GTP + H2O = GDP + phosphate + H(+). In terms of biological role, involved in targeting and insertion of nascent membrane proteins into the cytoplasmic membrane. Acts as a receptor for the complex formed by the signal recognition particle (SRP) and the ribosome-nascent chain (RNC). Interaction with SRP-RNC leads to the transfer of the RNC complex to the Sec translocase for insertion into the membrane, the hydrolysis of GTP by both Ffh and FtsY, and the dissociation of the SRP-FtsY complex into the individual components. This is Signal recognition particle receptor FtsY from Rickettsia felis (strain ATCC VR-1525 / URRWXCal2) (Rickettsia azadi).